The sequence spans 361 residues: Blue-sensitive opsin (361 aa).

At 1–43 the chain is on the extracellular side; sequence MHPPRPTTDLPEDFYIPMALDAPNITALSPFLVPQTHLGSPGL. N24 carries an N-linked (GlcNAc...) asparagine glycan. Residues 44–68 traverse the membrane as a helical segment; that stretch reads FRAMAAFMFLLIALGVPINTLTIFC. Topologically, residues 69-80 are cytoplasmic; that stretch reads TARFRKLRSHLN. The chain crosses the membrane as a helical span at residues 81-106; that stretch reads YILVNLALANLLVILVGSTTACYSFS. Residues 107-120 are Extracellular-facing; the sequence is QMYFALGPTACKIE. C117 and C194 are disulfide-bonded. The helical transmembrane segment at 121–140 threads the bilayer; sequence GFAATLGGMVSLWSLAVVAF. At 141–159 the chain is on the cytoplasmic side; sequence ERFLVICKPLGNFTFRGSH. The chain crosses the membrane as a helical span at residues 160-183; sequence AVLGCVATWVLGFVASAPPLFGWS. At 184 to 209 the chain is on the extracellular side; sequence RYIPEGLQCSCGPDWYTTDNKWHNES. The helical transmembrane segment at 210–237 threads the bilayer; it reads YVLFLFTFCFGVPLAIIVFSYGRLLITL. Residues 238–259 lie on the Cytoplasmic side of the membrane; that stretch reads RAVARQQEQSATTQKADREVTK. The chain crosses the membrane as a helical span at residues 260–283; it reads MVVVMVLGFLVCWAPYTAFALWVV. Topologically, residues 284–291 are extracellular; the sequence is THRGRSFE. Residues 292-316 form a helical membrane-spanning segment; that stretch reads VGLASIPSVFSKSSTVYNPVIYVLM. An N6-(retinylidene)lysine modification is found at K303. The Cytoplasmic portion of the chain corresponds to 317 to 361; it reads NKQFRSCMLKLLFCGRSPFGDDEDVSGSSQATQVSSVSSSHVAPA. The disordered stretch occupies residues 338–361; that stretch reads DEDVSGSSQATQVSSVSSSHVAPA. A compositionally biased stretch (low complexity) spans 342 to 361; sequence SGSSQATQVSSVSSSHVAPA.

It belongs to the G-protein coupled receptor 1 family. Opsin subfamily. Phosphorylated on some or all of the serine and threonine residues present in the C-terminal region. As to expression, the color pigments are found in the cone photoreceptor cells.

The protein localises to the membrane. Its function is as follows. Visual pigments are the light-absorbing molecules that mediate vision. They consist of an apoprotein, opsin, covalently linked to cis-retinal. This is Blue-sensitive opsin from Gallus gallus (Chicken).